The primary structure comprises 369 residues: Anthranilate phosphoribosyltransferase (369 aa).

Residues G85, 88–89 (GD), T93, 95–98 (NLST), 113–121 (KHGNRAASS), and S125 each bind 5-phospho-alpha-D-ribose 1-diphosphate. G85 lines the anthranilate pocket. S97 contacts Mg(2+). Anthranilate is bound at residue N116. R171 serves as a coordination point for anthranilate. D229 and E230 together coordinate Mg(2+).

The protein belongs to the anthranilate phosphoribosyltransferase family. In terms of assembly, homodimer. The cofactor is Mg(2+).

It catalyses the reaction N-(5-phospho-beta-D-ribosyl)anthranilate + diphosphate = 5-phospho-alpha-D-ribose 1-diphosphate + anthranilate. The protein operates within amino-acid biosynthesis; L-tryptophan biosynthesis; L-tryptophan from chorismate: step 2/5. Catalyzes the transfer of the phosphoribosyl group of 5-phosphorylribose-1-pyrophosphate (PRPP) to anthranilate to yield N-(5'-phosphoribosyl)-anthranilate (PRA). This Frankia alni (strain DSM 45986 / CECT 9034 / ACN14a) protein is Anthranilate phosphoribosyltransferase.